The chain runs to 457 residues: Multidrug resistance protein MdtK (457 aa).

The next 12 helical transmembrane spans lie at 11–31, 53–73, 93–113, 127–147, 160–180, 188–208, 239–259, 277–297, 316–336, 357–377, 387–407, and 418–438; these read LLALAIPVIIAQIAQTAMGFV, IWLPTILFGHGLLLALTPVIA, WLVAGLSVLIIAVLYNAGHII, AIGYLHAIMWGAPGYLCFQVL, GMVIGFIGLLINIPVNYIFIY, LGGVGCGVATASVYWIMYLLM, IAIGMPIALALFFEVTLFAVV, ALNFSSLMFVLPMSLGVAATI, RTAIAVGMAMATCTAIFTIVL, LMLLAALYQISDSVQVIGSGV, IFFITFIAYWLLGLPTGYLLA, and PSGFWIGFIIGLTSAAIMMAL.

Belongs to the multi antimicrobial extrusion (MATE) (TC 2.A.66.1) family. MdtK subfamily.

The protein localises to the cell inner membrane. Multidrug efflux pump that functions probably as a Na(+)/drug antiporter. The chain is Multidrug resistance protein MdtK from Edwardsiella ictaluri (strain 93-146).